The primary structure comprises 162 residues: ATP synthase subunit b (162 aa).

A helical transmembrane segment spans residues 6-25; it reads TLFTLVTFLVLMLAVGKVAW.

This sequence belongs to the ATPase B chain family. F-type ATPases have 2 components, F(1) - the catalytic core - and F(0) - the membrane proton channel. F(1) has five subunits: alpha(3), beta(3), gamma(1), delta(1), epsilon(1). F(0) has three main subunits: a(1), b(2) and c(10-14). The alpha and beta chains form an alternating ring which encloses part of the gamma chain. F(1) is attached to F(0) by a central stalk formed by the gamma and epsilon chains, while a peripheral stalk is formed by the delta and b chains.

It is found in the cell membrane. F(1)F(0) ATP synthase produces ATP from ADP in the presence of a proton or sodium gradient. F-type ATPases consist of two structural domains, F(1) containing the extramembraneous catalytic core and F(0) containing the membrane proton channel, linked together by a central stalk and a peripheral stalk. During catalysis, ATP synthesis in the catalytic domain of F(1) is coupled via a rotary mechanism of the central stalk subunits to proton translocation. Its function is as follows. Component of the F(0) channel, it forms part of the peripheral stalk, linking F(1) to F(0). In Lacticaseibacillus casei (strain BL23) (Lactobacillus casei), this protein is ATP synthase subunit b.